The chain runs to 329 residues: Replication factor C small subunit (329 aa).

51-58 serves as a coordination point for ATP; the sequence is GPPGTGKT.

This sequence belongs to the activator 1 small subunits family. RfcS subfamily. Heteromultimer composed of small subunits (RfcS) and large subunits (RfcL).

In terms of biological role, part of the RFC clamp loader complex which loads the PCNA sliding clamp onto DNA. The sequence is that of Replication factor C small subunit from Staphylothermus marinus (strain ATCC 43588 / DSM 3639 / JCM 9404 / F1).